A 2194-amino-acid chain; its full sequence is Glutamate synthase [NADH], amyloplastic (2194 aa).

The N-terminal 101 residues, 1-101 (MSNSLSLTFT…LYDPAFDKDS (101 aa)), are a transit peptide targeting the amyloplast. C102 (nucleophile) is an active-site residue. The region spanning 102–503 (CGVGFVAELN…PGMMLLVDFE (402 aa)) is the Glutamine amidotransferase type-2 domain. Residues 1021 to 1045 (GGKSNTGEGGEQPSRMEPLADGSRN) are disordered. Residue 1193-1250 (LAETHQTLVANDLRGRTTLQTDGQLKTGRDVAIAALLGAEEYGFSTAPLITLGCIMMR) coordinates FMN. [3Fe-4S] cluster-binding residues include C1246, C1252, and C1257. 1974–1988 (GGGDTGTDCIGTSIR) provides a ligand contact to NAD(+).

The protein belongs to the glutamate synthase family. Monomer. [3Fe-4S] cluster is required as a cofactor. The cofactor is FAD. FMN serves as cofactor. As to expression, expressed in infected cells in root nodules. Barely detected in roots and stems.

The protein resides in the plastid. Its subcellular location is the amyloplast. It carries out the reaction 2 L-glutamate + NAD(+) = L-glutamine + 2-oxoglutarate + NADH + H(+). Its pathway is amino-acid biosynthesis; L-glutamate biosynthesis via GLT pathway; L-glutamate from 2-oxoglutarate and L-glutamine (NAD(+) route): step 1/1. It functions in the pathway energy metabolism; nitrogen metabolism. Its activity is regulated as follows. Inhibited by malate, citrate, glutamate, NAD(+) and azaserine, but not by 2-2' dipyridil and N-ethylmaleimide. Required for the assimilation of symbiotically fixed nitrogen into amino acids in root nodules. This chain is Glutamate synthase [NADH], amyloplastic, found in Medicago sativa (Alfalfa).